The following is a 355-amino-acid chain: Homoserine O-succinyltransferase (355 aa).

The active-site Acyl-thioester intermediate is the C146. Positions 167 and 196 each coordinate substrate. The active-site Proton acceptor is H239. E241 is an active-site residue. R253 is a substrate binding site.

The protein belongs to the MetA family.

Its subcellular location is the cytoplasm. The enzyme catalyses L-homoserine + succinyl-CoA = O-succinyl-L-homoserine + CoA. The protein operates within amino-acid biosynthesis; L-methionine biosynthesis via de novo pathway; O-succinyl-L-homoserine from L-homoserine: step 1/1. Functionally, transfers a succinyl group from succinyl-CoA to L-homoserine, forming succinyl-L-homoserine. In Methylococcus capsulatus (strain ATCC 33009 / NCIMB 11132 / Bath), this protein is Homoserine O-succinyltransferase.